The primary structure comprises 748 residues: Polyribonucleotide nucleotidyltransferase (748 aa).

Mg(2+)-binding residues include Asp487 and Asp493. The region spanning 554–613 (PSTTTIKIDKDKIRDIIGPGGKVIKEICETSGAKIDISDDGTVSVYASDRDKLKVALDKI) is the KH domain. Positions 623 to 691 (GEIFNGTVVK…NKGKAKLTIK (69 aa)) constitute an S1 motif domain. Residues 695 to 733 (KDKFSNNTKPKTSVNNTKDNSEPEQRHDSSKKRAWNEDN) are disordered. Residues 699-712 (SNNTKPKTSVNNTK) show a composition bias toward polar residues. The span at 713–722 (DNSEPEQRHD) shows a compositional bias: basic and acidic residues.

It belongs to the polyribonucleotide nucleotidyltransferase family. Requires Mg(2+) as cofactor.

The protein resides in the cytoplasm. It carries out the reaction RNA(n+1) + phosphate = RNA(n) + a ribonucleoside 5'-diphosphate. In terms of biological role, involved in mRNA degradation. Catalyzes the phosphorolysis of single-stranded polyribonucleotides processively in the 3'- to 5'-direction. This Rickettsia rickettsii (strain Iowa) protein is Polyribonucleotide nucleotidyltransferase.